The sequence spans 471 residues: Methylenetetrahydrofolate--tRNA-(uracil-5-)-methyltransferase TrmFO (471 aa).

9 to 14 contacts FAD; that stretch reads GGGLSG.

The protein belongs to the MnmG family. TrmFO subfamily. FAD serves as cofactor.

The protein resides in the cytoplasm. The catalysed reaction is uridine(54) in tRNA + (6R)-5,10-methylene-5,6,7,8-tetrahydrofolate + NADH + H(+) = 5-methyluridine(54) in tRNA + (6S)-5,6,7,8-tetrahydrofolate + NAD(+). It catalyses the reaction uridine(54) in tRNA + (6R)-5,10-methylene-5,6,7,8-tetrahydrofolate + NADPH + H(+) = 5-methyluridine(54) in tRNA + (6S)-5,6,7,8-tetrahydrofolate + NADP(+). Functionally, catalyzes the folate-dependent formation of 5-methyl-uridine at position 54 (M-5-U54) in all tRNAs. This Beijerinckia indica subsp. indica (strain ATCC 9039 / DSM 1715 / NCIMB 8712) protein is Methylenetetrahydrofolate--tRNA-(uracil-5-)-methyltransferase TrmFO.